The following is a 92-amino-acid chain: Conotoxin Cal22f (92 aa).

A signal peptide spans 1–24 (MMSTKGITLFLCLLLLALATSVNG). The propeptide occupies 25 to 44 (GQGTRRSRMTRALHGGRPSA).

Contains 4 disulfide bonds. In terms of tissue distribution, expressed by the venom duct.

Its subcellular location is the secreted. In terms of biological role, probable neurotoxin with unknown target. Possibly targets ion channels. The protein is Conotoxin Cal22f of Californiconus californicus (California cone).